A 140-amino-acid polypeptide reads, in one-letter code: Nucleoside diphosphate kinase (140 aa).

Positions 11, 59, 87, 93, 104, and 114 each coordinate ATP. The Pros-phosphohistidine intermediate role is filled by His117.

Belongs to the NDK family. Homotetramer. Mg(2+) serves as cofactor.

It localises to the cytoplasm. It catalyses the reaction a 2'-deoxyribonucleoside 5'-diphosphate + ATP = a 2'-deoxyribonucleoside 5'-triphosphate + ADP. The catalysed reaction is a ribonucleoside 5'-diphosphate + ATP = a ribonucleoside 5'-triphosphate + ADP. In terms of biological role, major role in the synthesis of nucleoside triphosphates other than ATP. The ATP gamma phosphate is transferred to the NDP beta phosphate via a ping-pong mechanism, using a phosphorylated active-site intermediate. The protein is Nucleoside diphosphate kinase of Francisella philomiragia subsp. philomiragia (strain ATCC 25017 / CCUG 19701 / FSC 153 / O#319-036).